The chain runs to 121 residues: UPF0102 protein BF0706 (121 aa).

Belongs to the UPF0102 family.

The protein is UPF0102 protein BF0706 of Bacteroides fragilis (strain YCH46).